Reading from the N-terminus, the 142-residue chain is Large ribosomal subunit protein uL22c (142 aa).

This sequence belongs to the universal ribosomal protein uL22 family. As to quaternary structure, part of the 50S ribosomal subunit.

It is found in the plastid. Its subcellular location is the chloroplast. In terms of biological role, this protein binds specifically to 23S rRNA. Functionally, the globular domain of the protein is located near the polypeptide exit tunnel on the outside of the subunit, while an extended beta-hairpin is found that lines the wall of the exit tunnel in the center of the 70S ribosome. The protein is Large ribosomal subunit protein uL22c (rpl22) of Picea abies (Norway spruce).